Reading from the N-terminus, the 276-residue chain is Large ribosomal subunit protein uL2 (276 aa).

Disordered stretches follow at residues 1–20 and 219–276; these read MGIKKYNPTTNGRRNMTTND and TVRG…RRKK. Residues 7–20 show a composition bias toward polar residues; that stretch reads NPTTNGRRNMTTND.

This sequence belongs to the universal ribosomal protein uL2 family. As to quaternary structure, part of the 50S ribosomal subunit. Forms a bridge to the 30S subunit in the 70S ribosome.

Its function is as follows. One of the primary rRNA binding proteins. Required for association of the 30S and 50S subunits to form the 70S ribosome, for tRNA binding and peptide bond formation. It has been suggested to have peptidyltransferase activity; this is somewhat controversial. Makes several contacts with the 16S rRNA in the 70S ribosome. This is Large ribosomal subunit protein uL2 from Bacillus anthracis (strain A0248).